The following is a 331-amino-acid chain: Fructose-1,6-bisphosphatase class 1 (331 aa).

Mg(2+) is bound by residues E88, D108, L110, and D111. Residues 111–114 and N201 each bind substrate; that span reads DGSS. E273 contacts Mg(2+).

This sequence belongs to the FBPase class 1 family. As to quaternary structure, homotetramer. Requires Mg(2+) as cofactor.

It is found in the cytoplasm. The catalysed reaction is beta-D-fructose 1,6-bisphosphate + H2O = beta-D-fructose 6-phosphate + phosphate. Its pathway is carbohydrate biosynthesis; gluconeogenesis. This chain is Fructose-1,6-bisphosphatase class 1, found in Methylobacillus flagellatus (strain ATCC 51484 / DSM 6875 / VKM B-1610 / KT).